Consider the following 477-residue polypeptide: MTTSSHSSEQPTSTQTSGMWGGRFTEATDAFVAEFTASVQFDQRFYKQDIAGSIAHATMLAKVGVLTEAERDDIIQGLSAIKSEIEAGQFEWRIDLEDVHMNIESRLTQRIGITGKKLHTGRSRNDQVATDIRLYLRDEIDDILTILLRLQKGLLGLAAQNTQTIMPGFTHLQTAQPVTFGHHLMAWFEMFVRDTERLQDCRKRVNRMPLGSAALAGTTYPIDRAFTAELLGFEAVSENSLDAVSDRDFAIEFNAAASLIMMHLSRMSEELILWTSAQFKFVNIPDRFCTGSSIMPQKKNPDVPELIRGKSGRVFGDLISLLTLMKGQPLAYNKDNQEDKEPLFDAIDTVRGSLMAFADMVPALGPNIEIMREAALRGFSTATDLADYLVKKGVAFRDAHEIVGKAVALGVQEEKDLSELSLEQLQQFSDLITADVFDKALTLEASVNARDHIGGTSPKQVEAAIARAYDRLEKLYA.

Residues 1 to 18 are compositionally biased toward polar residues; the sequence is MTTSSHSSEQPTSTQTSG. The interval 1-21 is disordered; the sequence is MTTSSHSSEQPTSTQTSGMWG.

This sequence belongs to the lyase 1 family. Argininosuccinate lyase subfamily.

The protein localises to the cytoplasm. The enzyme catalyses 2-(N(omega)-L-arginino)succinate = fumarate + L-arginine. The protein operates within amino-acid biosynthesis; L-arginine biosynthesis; L-arginine from L-ornithine and carbamoyl phosphate: step 3/3. The polypeptide is Argininosuccinate lyase (Acinetobacter baylyi (strain ATCC 33305 / BD413 / ADP1)).